Reading from the N-terminus, the 396-residue chain is L-lactate dehydrogenase (396 aa).

Residues 1–380 enclose the FMN hydroxy acid dehydrogenase domain; the sequence is MIISAASDYR…SGDSLVQELG (380 aa). Tyrosine 24 provides a ligand contact to substrate. The FMN site is built by serine 106 and glutamine 127. Residue tyrosine 129 coordinates substrate. Residue threonine 155 participates in FMN binding. Residue arginine 164 participates in substrate binding. Residue lysine 251 coordinates FMN. The Proton acceptor role is filled by histidine 275. Arginine 278 provides a ligand contact to substrate. 306–330 lines the FMN pocket; sequence DSGIRNGLDVVRMIALGADTVLLGR.

It belongs to the FMN-dependent alpha-hydroxy acid dehydrogenase family. Requires FMN as cofactor.

The protein resides in the cell inner membrane. The enzyme catalyses (S)-lactate + A = pyruvate + AH2. Catalyzes the conversion of L-lactate to pyruvate. Is coupled to the respiratory chain. This chain is L-lactate dehydrogenase, found in Salmonella heidelberg (strain SL476).